A 348-amino-acid chain; its full sequence is Histidinol-phosphate aminotransferase (348 aa).

N6-(pyridoxal phosphate)lysine is present on K210.

Belongs to the class-II pyridoxal-phosphate-dependent aminotransferase family. Histidinol-phosphate aminotransferase subfamily. In terms of assembly, homodimer. It depends on pyridoxal 5'-phosphate as a cofactor.

The enzyme catalyses L-histidinol phosphate + 2-oxoglutarate = 3-(imidazol-4-yl)-2-oxopropyl phosphate + L-glutamate. The protein operates within amino-acid biosynthesis; L-histidine biosynthesis; L-histidine from 5-phospho-alpha-D-ribose 1-diphosphate: step 7/9. The protein is Histidinol-phosphate aminotransferase of Pseudomonas putida (strain ATCC 47054 / DSM 6125 / CFBP 8728 / NCIMB 11950 / KT2440).